Here is a 266-residue protein sequence, read N- to C-terminus: Gap junction beta-4 protein (266 aa).

Residues 2 to 13 lie within the membrane without spanning it; it reads NWGFLQGILSGV. At 14–20 the chain is on the cytoplasmic side; that stretch reads NKYSTAL. A helical membrane pass occupies residues 21–40; sequence GRIWLSVVFIFRVLVYVVAA. Residues 41 to 73 are Extracellular-facing; it reads EEVWDDDQKDFICNTKQPGCPNVCYDEFFPVSH. 3 disulfides stabilise this stretch: Cys-53/Cys-175, Cys-60/Cys-169, and Cys-64/Cys-164. Residues 74-94 form a helical membrane-spanning segment; sequence VRLWALQLILVTCPSLLVVMH. Topologically, residues 95-130 are cytoplasmic; it reads VAYREERERKHRLKHGPNAPALYSNLSKKRGGLWWT. A helical membrane pass occupies residues 131–151; it reads YLLSLIFKAAVDSGFLYIFHC. Residues 152–184 lie on the Extracellular side of the membrane; sequence IYKDYDMPRVVACSVTPCPHTVDCYIARPTEKK. Residues 185-205 traverse the membrane as a helical segment; that stretch reads VFTYFMVVTAAICILLNLSEV. The Cytoplasmic segment spans residues 206-266; it reads VYLVGKRCME…MATVDAGVYP (61 aa).

It belongs to the connexin family. Beta-type (group I) subfamily. As to quaternary structure, a hemichannel or connexon is composed of a hexamer of connexins. A functional gap junction is formed by the apposition of two hemichannels. Forms heteromeric channels with GJB2. Detected in cochlea (at protein level). Detected in cochlea. Expressed in skin.

It localises to the cell membrane. The protein localises to the cell junction. It is found in the gap junction. Its function is as follows. Structural component of gap junctions. Gap junctions are dodecameric channels that connect the cytoplasm of adjoining cells. They are formed by the docking of two hexameric hemichannels, one from each cell membrane. Small molecules and ions diffuse from one cell to a neighboring cell via the central pore. The protein is Gap junction beta-4 protein (Gjb4) of Mus musculus (Mouse).